The primary structure comprises 479 residues: Ribosomal RNA small subunit methyltransferase F (479 aa).

S-adenosyl-L-methionine contacts are provided by residues 125–131 (AAAPGSK), glutamate 149, glycine 177, and aspartate 194. Cysteine 247 serves as the catalytic Nucleophile.

Belongs to the class I-like SAM-binding methyltransferase superfamily. RsmB/NOP family.

It localises to the cytoplasm. The catalysed reaction is cytidine(1407) in 16S rRNA + S-adenosyl-L-methionine = 5-methylcytidine(1407) in 16S rRNA + S-adenosyl-L-homocysteine + H(+). Specifically methylates the cytosine at position 1407 (m5C1407) of 16S rRNA. This chain is Ribosomal RNA small subunit methyltransferase F, found in Shigella flexneri serotype 5b (strain 8401).